We begin with the raw amino-acid sequence, 319 residues long: MSLNYLDFEQPIAELEAKIDSLKSVGRQDEKLDINLDEEVQRLRDKSVELTRKIFSDLGAWQIAQLARHPLRPYTLDYVRNVFTDFDELAGDRAYADDKAIVGGIARLEDRPVMIIGHQKGRETKEKIRRNFGMPAPEGYRKALRLMEMAERFNMPIITFIDTPGAYPGVGAEERGQSEAIARNLREMSGLKVPVICTVIGEGGSGGALAIGVGDKVNMLQYSTYSVISPEGCASILWKSADKAPLAAEAMGIIAPRLKELKLIDSVIPEPLGGAHRDPLAIGASLKAQLLADLADLDTLTKAELLDRRYQRLMSYGYA.

A CoA carboxyltransferase C-terminal domain is found at 35–296 (NLDEEVQRLR…KAQLLADLAD (262 aa)).

This sequence belongs to the AccA family. As to quaternary structure, acetyl-CoA carboxylase is a heterohexamer composed of biotin carboxyl carrier protein (AccB), biotin carboxylase (AccC) and two subunits each of ACCase subunit alpha (AccA) and ACCase subunit beta (AccD).

Its subcellular location is the cytoplasm. The enzyme catalyses N(6)-carboxybiotinyl-L-lysyl-[protein] + acetyl-CoA = N(6)-biotinyl-L-lysyl-[protein] + malonyl-CoA. It participates in lipid metabolism; malonyl-CoA biosynthesis; malonyl-CoA from acetyl-CoA: step 1/1. Its function is as follows. Component of the acetyl coenzyme A carboxylase (ACC) complex. First, biotin carboxylase catalyzes the carboxylation of biotin on its carrier protein (BCCP) and then the CO(2) group is transferred by the carboxyltransferase to acetyl-CoA to form malonyl-CoA. The protein is Acetyl-coenzyme A carboxylase carboxyl transferase subunit alpha of Erwinia tasmaniensis (strain DSM 17950 / CFBP 7177 / CIP 109463 / NCPPB 4357 / Et1/99).